Reading from the N-terminus, the 358-residue chain is Isopentenyl-diphosphate delta-isomerase (358 aa).

R12 to K13 is a substrate binding site. Residues A69 to T71, S99, and N128 contribute to the FMN site. Q158 contacts substrate. E159 provides a ligand contact to Mg(2+). FMN is bound by residues K190, T220, G267–R269, and A288–G289.

The protein belongs to the IPP isomerase type 2 family. Homooctamer. Dimer of tetramers. FMN is required as a cofactor. NADPH serves as cofactor. It depends on Mg(2+) as a cofactor.

It localises to the cytoplasm. It catalyses the reaction isopentenyl diphosphate = dimethylallyl diphosphate. Involved in the biosynthesis of isoprenoids. Catalyzes the 1,3-allylic rearrangement of the homoallylic substrate isopentenyl (IPP) to its allylic isomer, dimethylallyl diphosphate (DMAPP). In Listeria monocytogenes serotype 4a (strain HCC23), this protein is Isopentenyl-diphosphate delta-isomerase.